Here is a 615-residue protein sequence, read N- to C-terminus: Cysteine-rich receptor-like protein kinase 1 (615 aa).

Positions 1–28 (MQICASIAQFLAWVSFLVLLATVGSSSS) are cleaved as a signal peptide. Gnk2-homologous domains lie at 29 to 131 (SESL…DRDF) and 137 to 237 (DPTF…THKF). Topologically, residues 29-266 (SESLLNCQPL…SFFPHLSDRD (238 aa)) are extracellular. Residues asparagine 100 and asparagine 165 are each glycosylated (N-linked (GlcNAc...) asparagine). Residues 267–287 (VTRLAIAAISLSILTSLGAFI) form a helical membrane-spanning segment. The Cytoplasmic segment spans residues 288–615 (SYRRVSRKRK…VLMPDEETRV (328 aa)). The Protein kinase domain maps to 318 to 602 (FHDSMKLGQG…FEYPKQPPFL (285 aa)). ATP contacts are provided by residues 324-332 (LGQGGAGSV) and lysine 346. Residue aspartate 443 is the Proton acceptor of the active site.

The protein belongs to the protein kinase superfamily. Ser/Thr protein kinase family. CRK subfamily. As to expression, expressed in the whole plant at low levels.

Its subcellular location is the membrane. It catalyses the reaction L-seryl-[protein] + ATP = O-phospho-L-seryl-[protein] + ADP + H(+). The catalysed reaction is L-threonyl-[protein] + ATP = O-phospho-L-threonyl-[protein] + ADP + H(+). This Arabidopsis thaliana (Mouse-ear cress) protein is Cysteine-rich receptor-like protein kinase 1.